The sequence spans 892 residues: Alanine--tRNA ligase (892 aa).

Positions 596, 600, 700, and 704 each coordinate Zn(2+).

It belongs to the class-II aminoacyl-tRNA synthetase family. Zn(2+) serves as cofactor.

It is found in the cytoplasm. The enzyme catalyses tRNA(Ala) + L-alanine + ATP = L-alanyl-tRNA(Ala) + AMP + diphosphate. Functionally, catalyzes the attachment of alanine to tRNA(Ala) in a two-step reaction: alanine is first activated by ATP to form Ala-AMP and then transferred to the acceptor end of tRNA(Ala). Also edits incorrectly charged Ser-tRNA(Ala) and Gly-tRNA(Ala) via its editing domain. This chain is Alanine--tRNA ligase, found in Methanococcus vannielii (strain ATCC 35089 / DSM 1224 / JCM 13029 / OCM 148 / SB).